The following is a 380-amino-acid chain: NADPH oxidoreductase (380 aa).

The FAD-binding FR-type domain maps to 58–164 (ARELRGRILG…AAPQGNFVLP (107 aa)). The 2Fe-2S ferredoxin-type domain maps to 299–380 (GTVTFARSGK…AASGDCVLDI (82 aa)). [2Fe-2S] cluster-binding residues include cysteine 333, cysteine 338, cysteine 341, and cysteine 368.

As to quaternary structure, interacts with DesA3 to form a functional acyl-CoA desaturase complex. [2Fe-2S] cluster is required as a cofactor. FAD serves as cofactor.

The protein localises to the cell membrane. It participates in lipid metabolism; fatty acid metabolism. Its function is as follows. Is likely involved in the aerobic desaturation system responsible for the synthesis of oleic acid from stearoyl-CoA; oleic acid is a precursor of mycobacterial membrane phospholipids and triglycerides. Is the electron transfer partner for the stearoyl-CoA 9-desaturase DesA3. Catalyzes electron transfer reaction between NADPH and the diiron center of DesA3. Cannot use NADH. This is NADPH oxidoreductase from Mycobacterium tuberculosis (strain ATCC 25618 / H37Rv).